Reading from the N-terminus, the 554-residue chain is Hydroxylamine reductase (554 aa).

Positions 3, 6, 18, and 25 each coordinate [2Fe-2S] cluster. Hybrid [4Fe-2O-2S] cluster contacts are provided by H252, E276, C320, C408, C436, C461, E495, and K497. C408 carries the cysteine persulfide modification.

This sequence belongs to the HCP family. [2Fe-2S] cluster serves as cofactor. It depends on hybrid [4Fe-2O-2S] cluster as a cofactor.

Its subcellular location is the cytoplasm. The catalysed reaction is A + NH4(+) + H2O = hydroxylamine + AH2 + H(+). Functionally, catalyzes the reduction of hydroxylamine to form NH(3) and H(2)O. The sequence is that of Hydroxylamine reductase from Shewanella loihica (strain ATCC BAA-1088 / PV-4).